The primary structure comprises 472 residues: Alkaline phosphatase (472 aa).

Residues 1–21 (MKQSAIALALLSCLITPVSQA) form the signal peptide. Position 74 (Asp-74) interacts with Mg(2+). Asp-74 is a Zn(2+) binding site. Ser-125 serves as the catalytic Phosphoserine intermediate. Residues Asp-176 and Thr-178 each coordinate Mg(2+). 2 disulfide bridges follow: Cys-191-Cys-201 and Cys-309-Cys-359. A Mg(2+)-binding site is contributed by Glu-345. Zn(2+) contacts are provided by Asp-350, His-354, Asp-392, His-393, and His-435.

It belongs to the alkaline phosphatase family. As to quaternary structure, homodimer. Requires Mg(2+) as cofactor. The cofactor is Zn(2+).

Its subcellular location is the periplasm. It catalyses the reaction a phosphate monoester + H2O = an alcohol + phosphate. This is Alkaline phosphatase (phoA) from Escherichia fergusonii (strain ATCC 35469 / DSM 13698 / CCUG 18766 / IAM 14443 / JCM 21226 / LMG 7866 / NBRC 102419 / NCTC 12128 / CDC 0568-73).